The primary structure comprises 297 residues: Tyrosine recombinase XerD (297 aa).

The Core-binding (CB) domain occupies 1-86 (MNDLIDDFLH…SLRSFFHYLM (86 aa)). The 185-residue stretch at 107–291 (SLPKVLNLDD…TKLRLKDVYK (185 aa)) folds into the Tyr recombinase domain. Catalysis depends on residues arginine 147, lysine 171, histidine 243, arginine 246, and histidine 269. Catalysis depends on tyrosine 278, which acts as the O-(3'-phospho-DNA)-tyrosine intermediate.

It belongs to the 'phage' integrase family. XerD subfamily. As to quaternary structure, forms a cyclic heterotetrameric complex composed of two molecules of XerC and two molecules of XerD.

The protein localises to the cytoplasm. Its function is as follows. Site-specific tyrosine recombinase, which acts by catalyzing the cutting and rejoining of the recombining DNA molecules. The XerC-XerD complex is essential to convert dimers of the bacterial chromosome into monomers to permit their segregation at cell division. It also contributes to the segregational stability of plasmids. The chain is Tyrosine recombinase XerD from Listeria innocua serovar 6a (strain ATCC BAA-680 / CLIP 11262).